We begin with the raw amino-acid sequence, 305 residues long: Homoserine O-acetyltransferase (305 aa).

The active-site Acyl-thioester intermediate is Cys142. Residues Lys163 and Ser192 each contribute to the substrate site. His235 (proton acceptor) is an active-site residue. Glu237 is an active-site residue. Arg249 contributes to the substrate binding site.

Belongs to the MetA family.

The protein resides in the cytoplasm. It carries out the reaction L-homoserine + acetyl-CoA = O-acetyl-L-homoserine + CoA. It functions in the pathway amino-acid biosynthesis; L-methionine biosynthesis via de novo pathway; O-acetyl-L-homoserine from L-homoserine: step 1/1. Transfers an acetyl group from acetyl-CoA to L-homoserine, forming acetyl-L-homoserine. This Bacteroides fragilis (strain YCH46) protein is Homoserine O-acetyltransferase.